Here is an 86-residue protein sequence, read N- to C-terminus: High affinity immunoglobulin epsilon receptor subunit gamma (86 aa).

An N-terminal signal peptide occupies residues 1–18 (MIPAVVLLLLLLVEQAAA). Topologically, residues 19–23 (LGEPQ) are extracellular. A helical transmembrane segment spans residues 24–44 (LCYILDAILFLYGIVLTLLYC). Over 45–86 (RLKIQVRKAAIASYEKSDGVYTGLSTRNQETYETLKHEKPPQ) the chain is Cytoplasmic. Positions 54–82 (AIASYEKSDGVYTGLSTRNQETYETLKHE) constitute an ITAM domain. Y65 is modified (phosphotyrosine). A Phosphoserine modification is found at S69. The residue at position 76 (Y76) is a Phosphotyrosine. Residue T78 is modified to Phosphothreonine.

This sequence belongs to the CD3Z/FCER1G family. IgE Fc receptor is a tetramer of an alpha chain, a beta chain, and two disulfide linked gamma chains. Associates with FCGR1A; forms a functional signaling complex. The signaling subunit of immunoglobulin gamma (IgG) Fc receptor complex. As a homodimer or a heterodimer of CD247 and FCER1G, associates with the ligand binding subunit FCGR3A to form a functional receptor complex. Associates with CLEC6A. Interacts with CLEC4E. Interacts (via ITAM domain) with SYK (via SH2 domains); activates SYK, enabling integrin-mediated activation of neutrophils and macrophages. Interacts with CSF2RB and recruits SYK in response to IL3 stimulation; this interaction is direct. Interacts with CD300LH; the interaction may be indirect. Interacts with CD300LD. Interacts with TARM1.

It is found in the cell membrane. Its function is as follows. Adapter protein containing an immunoreceptor tyrosine-based activation motif (ITAM) that transduces activation signals from various immunoreceptors. As a component of the high-affinity immunoglobulin E (IgE) receptor, mediates allergic inflammatory signaling in mast cells. As a constitutive component of interleukin-3 receptor complex, selectively mediates interleukin 4/IL4 production by basophils priming T-cells toward effector T-helper 2 subset. Associates with pattern recognition receptors CLEC4D and CLEC4E to form a functional signaling complex in myeloid cells. Binding of mycobacterial trehalose 6,6'-dimycolate (TDM) to this receptor complex leads to phosphorylation of ITAM, triggering activation of SYK, CARD9 and NF-kappa-B, consequently driving maturation of antigen-presenting cells and shaping antigen-specific priming of T-cells toward effector T-helper 1 and T-helper 17 cell subtypes. May function cooperatively with other activating receptors. Functionally linked to integrin beta-2/ITGB2-mediated neutrophil activation. Also involved in integrin alpha-2/ITGA2-mediated platelet activation. The protein is High affinity immunoglobulin epsilon receptor subunit gamma (FCER1G) of Macaca fascicularis (Crab-eating macaque).